The sequence spans 257 residues: DNA repair protein RecO (257 aa).

The protein belongs to the RecO family.

Involved in DNA repair and RecF pathway recombination. The polypeptide is DNA repair protein RecO (Synechococcus sp. (strain CC9605)).